Consider the following 39-residue polypeptide: Contryphan-Cal4 (39 aa).

An N-terminal signal peptide occupies residues 1–20 (MTRTAVLLLTLLFLVAMAAS). A disulfide bridge connects residues cysteine 29 and cysteine 35.

As to expression, expressed by the venom duct.

The protein localises to the secreted. In terms of biological role, probable neurotoxin. The chain is Contryphan-Cal4 from Californiconus californicus (California cone).